Consider the following 75-residue polypeptide: uncharacterized protein (75 aa).

This is an uncharacterized protein from Rickettsia conorii (strain ATCC VR-613 / Malish 7).